Reading from the N-terminus, the 449-residue chain is Hyaluronidase-1 (449 aa).

An N-terminal signal peptide occupies residues Met-1–Val-23. 2 cysteine pairs are disulfide-bonded: Cys-47–Cys-340 and Cys-211–Cys-227. 3 N-linked (GlcNAc...) asparagine glycosylation sites follow: Asn-67, Asn-103, and Asn-111. The active-site Proton donor is Glu-135. An N-linked (GlcNAc...) asparagine glycan is attached at Asn-153. Asn-357 carries N-linked (GlcNAc...) asparagine glycosylation. 3 disulfide bridges follow: Cys-365–Cys-376, Cys-370–Cys-427, and Cys-429–Cys-438. N-linked (GlcNAc...) asparagine glycosylation occurs at Asn-401. Residues Cys-427 to Cys-438 enclose the EGF-like domain.

The protein belongs to the glycosyl hydrolase 56 family. Monomer. In terms of tissue distribution, expressed by the venom gland.

It is found in the secreted. It carries out the reaction Random hydrolysis of (1-&gt;4)-linkages between N-acetyl-beta-D-glucosamine and D-glucuronate residues in hyaluronate.. Snake venom endo-hyaluronidase that degrades hyaluronan to smaller oligosaccharide fragments. In venom, it is not toxic by itself, but increases the diffusion of other venom proteins by degrading the extracellular matrix. In addition, it displays antiedematogenic activity. In Cerastes cerastes (Horned desert viper), this protein is Hyaluronidase-1.